Here is a 261-residue protein sequence, read N- to C-terminus: Zinc import ATP-binding protein ZnuC (261 aa).

The region spanning 6–221 (IRLEQVGVTF…PAFVELFGKN (216 aa)) is the ABC transporter domain. Residue 38-45 (GPNGAGKT) participates in ATP binding.

The protein belongs to the ABC transporter superfamily. Zinc importer (TC 3.A.1.15.5) family. The complex is composed of two ATP-binding proteins (ZnuC), two transmembrane proteins (ZnuB) and a solute-binding protein (ZnuA).

Its subcellular location is the cell inner membrane. The catalysed reaction is Zn(2+)(out) + ATP(in) + H2O(in) = Zn(2+)(in) + ADP(in) + phosphate(in) + H(+)(in). Its function is as follows. Part of the ABC transporter complex ZnuABC involved in zinc import. Responsible for energy coupling to the transport system. The sequence is that of Zinc import ATP-binding protein ZnuC from Pseudomonas fluorescens (strain ATCC BAA-477 / NRRL B-23932 / Pf-5).